Consider the following 356-residue polypeptide: Phosphoribosylformylglycinamidine cyclo-ligase (356 aa).

Belongs to the AIR synthase family.

The protein resides in the cytoplasm. The catalysed reaction is 2-formamido-N(1)-(5-O-phospho-beta-D-ribosyl)acetamidine + ATP = 5-amino-1-(5-phospho-beta-D-ribosyl)imidazole + ADP + phosphate + H(+). The protein operates within purine metabolism; IMP biosynthesis via de novo pathway; 5-amino-1-(5-phospho-D-ribosyl)imidazole from N(2)-formyl-N(1)-(5-phospho-D-ribosyl)glycinamide: step 2/2. The polypeptide is Phosphoribosylformylglycinamidine cyclo-ligase (Rhizobium meliloti (strain 1021) (Ensifer meliloti)).